The primary structure comprises 647 residues: Microtubule-associated protein 9 (647 aa).

An N-acetylserine modification is found at Ser2. Residue Tyr12 is modified to Phosphotyrosine. Disordered regions lie at residues Lys127–Met323, Ser344–Ala421, Lys491–Gln514, Lys530–Lys553, Asn580–Ile600, and Gln613–Phe647. The span at Gln133 to Lys145 shows a compositional bias: basic and acidic residues. The segment covering Ile155–Leu166 has biased composition (polar residues). Residues Pro174 to Ser186 are compositionally biased toward basic residues. Residues Lys184 to Ala210 adopt a coiled-coil conformation. The segment covering His187–Ala200 has biased composition (basic and acidic residues). Polar residues-rich tracts occupy residues Ala210–Gly219 and Cys239–Lys249. Positions Asp268–Glu287 are enriched in basic and acidic residues. The stretch at Ala298–Thr328 forms a coiled coil. A compositionally biased stretch (low complexity) spans Asn365–Arg374. Residues Met443–Glu628 are a coiled coil.

Binds to purified microtubules via its C-terminus.

Its subcellular location is the cytoplasm. It is found in the cytoskeleton. It localises to the spindle. Its function is as follows. Involved in organization of the bipolar mitotic spindle. Required for bipolar spindle assembly, mitosis progression and cytokinesis. May act by stabilizing interphase microtubules. In Homo sapiens (Human), this protein is Microtubule-associated protein 9 (MAP9).